The following is a 653-amino-acid chain: MPVGGLLPLFSSPAGGVLGGGLGGGGGRKGSGPAALRLTEKFVLLLVFSAFITLCFGAIFFLPDSSKLLSGVLFHSSPALQPAADHKPGPGARAEDAAEGRARRREEGAPGDPEAALEDNLARIRENHERALREAKETLQKLPEEIQRDILLEKKKVAQDQLRDKAPFRGLPPVDFVPPIGVESREPADAAIREKRAKIKEMMKHAWNNYKGYAWGLNELKPISKGGHSSSLFGNIKGATIVDALDTLFIMEMKHEFEEAKSWVEENLDFNVNAEISVFEVNIRFVGGLLSAYYLSGEEIFRKKAVELGVKLLPAFHTPSGIPWALLNMKSGIGRNWPWASGGSSILAEFGTLHLEFMHLSHLSGNPIFAEKVMNIRTVLNKLEKPQGLYPNYLNPSSGQWGQHHVSVGGLGDSFYEYLLKAWLMSDKTDLEAKKMYFDAVQAIETHLIRKSSSGLTYIAEWKGGLLEHKMGHLTCFAGGMFALGADAAPEGMAQHYLELGAEIARTCHESYNRTFMKLGPEAFRFDGGVEAIATRQNEKYYILRPEVMETYMYMWRLTHDPKYRKWAWEAVEALENHCRVNGGYSGLRDVYLLHESYDDVQQSFFLAETLKYLYLIFSDDDLLPLEHWIFNSEAHLLPILPKDKKEVEIREE.

The Cytoplasmic segment spans residues 1 to 41 (MPVGGLLPLFSSPAGGVLGGGLGGGGGRKGSGPAALRLTEK). The chain crosses the membrane as a helical; Signal-anchor for type II membrane protein span at residues 42–62 (FVLLLVFSAFITLCFGAIFFL). Over 63 to 653 (PDSSKLLSGV…DKKEVEIREE (591 aa)) the chain is Lumenal. Residues 81 to 116 (QPAADHKPGPGARAEDAAEGRARRREEGAPGDPEAA) are disordered. Positions 84–108 (ADHKPGPGARAEDAAEGRARRREEG) are enriched in basic and acidic residues. Cys-476 and Cys-508 form a disulfide bridge. N-linked (GlcNAc...) asparagine glycosylation is present at Asn-513. Glu-522 acts as the Proton donor in catalysis.

This sequence belongs to the glycosyl hydrolase 47 family. Requires Ca(2+) as cofactor.

It is found in the golgi apparatus membrane. It catalyses the reaction N(4)-(alpha-D-Man-(1-&gt;2)-alpha-D-Man-(1-&gt;2)-alpha-D-Man-(1-&gt;3)-[alpha-D-Man-(1-&gt;2)-alpha-D-Man-(1-&gt;3)-[alpha-D-Man-(1-&gt;2)-alpha-D-Man-(1-&gt;6)]-alpha-D-Man-(1-&gt;6)]-beta-D-Man-(1-&gt;4)-beta-D-GlcNAc-(1-&gt;4)-beta-D-GlcNAc)-L-asparaginyl-[protein] (N-glucan mannose isomer 9A1,2,3B1,2,3) + 4 H2O = N(4)-(alpha-D-Man-(1-&gt;3)-[alpha-D-Man-(1-&gt;3)-[alpha-D-Man-(1-&gt;6)]-alpha-D-Man-(1-&gt;6)]-beta-D-Man-(1-&gt;4)-beta-D-GlcNAc-(1-&gt;4)-beta-D-GlcNAc)-L-asparaginyl-[protein] (N-glucan mannose isomer 5A1,2) + 4 beta-D-mannose. The catalysed reaction is N(4)-(alpha-D-Man-(1-&gt;2)-alpha-D-Man-(1-&gt;2)-alpha-D-Man-(1-&gt;3)-[alpha-D-Man-(1-&gt;3)-[alpha-D-Man-(1-&gt;2)-alpha-D-Man-(1-&gt;6)]-alpha-D-Man-(1-&gt;6)]-beta-D-Man-(1-&gt;4)-beta-D-GlcNAc-(1-&gt;4)-beta-D-GlcNAc)-L-asparaginyl-[protein] (N-glucan mannose isomer 8A1,2,3B1,3) + 3 H2O = N(4)-(alpha-D-Man-(1-&gt;3)-[alpha-D-Man-(1-&gt;3)-[alpha-D-Man-(1-&gt;6)]-alpha-D-Man-(1-&gt;6)]-beta-D-Man-(1-&gt;4)-beta-D-GlcNAc-(1-&gt;4)-beta-D-GlcNAc)-L-asparaginyl-[protein] (N-glucan mannose isomer 5A1,2) + 3 beta-D-mannose. It functions in the pathway protein modification; protein glycosylation. Its activity is regulated as follows. Inhibited by both 1-deoxymannojirimycin and kifunensine. Its function is as follows. Involved in the maturation of Asn-linked oligosaccharides. Progressively trim alpha-1,2-linked mannose residues from Man(9)GlcNAc(2) to produce Man(5)GlcNAc(2). The sequence is that of Mannosyl-oligosaccharide 1,2-alpha-mannosidase IA (MAN1A1) from Homo sapiens (Human).